The sequence spans 676 residues: PAS domain-containing protein cky-1 (676 aa).

Over residues 45 to 72 (SALNNNSINVPNNNTMGMSSAGSSNGSN) the composition is skewed to low complexity. Residues 45 to 89 (SALNNNSINVPNNNTMGMSSAGSSNGSNLVNGQQRSTRGASKQRR) form a disordered region. Over residues 73-84 (LVNGQQRSTRGA) the composition is skewed to polar residues. The segment at 76–89 (GQQRSTRGASKQRR) is basic motif. Residues 76-129 (GQQRSTRGASKQRRDQINVEIQKLRDLLPLSDLIKDRLFQLQVMSLGCIFIRKH) enclose the bHLH domain. The segment at 90–129 (DQINVEIQKLRDLLPLSDLIKDRLFQLQVMSLGCIFIRKH) is helix-loop-helix motif. A PAS domain is found at 165–215 (MLMVTRSGKILHVSDNASEYLGHSVEEIMCQGDSIYDLVDGRDHGAVQAEL). The interval 436 to 462 (FSCQDSPPPSEEQQPSSPQTPPFTEQP) is disordered.

As to quaternary structure, heterodimer; efficient DNA binding requires dimerization with another bHLH protein. Forms a heterodimer with ARNT homolog aha-1; binds DNA as heterodimer.

It is found in the nucleus. Transcription factor. Efficient DNA binding requires dimerization with another bHLH protein, such as ARNT homolog aha-1. Regulates transcription of target genes, probably acting in complex with aha-1. This Caenorhabditis elegans protein is PAS domain-containing protein cky-1.